The following is a 217-amino-acid chain: CD99 antigen-like protein 2 (217 aa).

A signal peptide spans 1-25 (MVAWRWACLICLAFSLTTLVQRGSG). Topologically, residues 26–141 (DTGGFRLEDA…DDSGMSAETG (116 aa)) are extracellular. The segment at 36-136 (VEGTSSVKQR…GGDNSDDSGM (101 aa)) is disordered. Residues 50-64 (TTTTRRPGATRAPAK) show a composition bias toward low complexity. Positions 70-82 (AEDDFNLADALDD) are enriched in acidic residues. A compositionally biased stretch (basic and acidic residues) spans 83–92 (QNDRDHDRKK). O-linked (Xyl...) (chondroitin sulfate) serine glycosylation is present at serine 134. A helical transmembrane segment spans residues 142-162 (TIAGVASALAMALIGAVSSYI). Topologically, residues 163–217 (SYQQKKFCFSIQQGLNADYVKGENLEAVVCEEPQVKYSALQTQSTEPPPPEPPRI) are cytoplasmic.

Belongs to the CD99 family. O-glycosylated.

Its subcellular location is the cell membrane. It localises to the cell junction. The protein localises to the secreted. In terms of biological role, plays a role in a late step of leukocyte extravasation helping cells to overcome the endothelial basement membrane. Acts at the same site as, but independently of, PECAM1. Homophilic adhesion molecule, but these interactions may not be required for cell aggregation. In Bos taurus (Bovine), this protein is CD99 antigen-like protein 2 (CD99L2).